The primary structure comprises 120 residues: Spermidine export protein MdtJ (120 aa).

The next 4 helical transmembrane spans lie at 1–21, 31–51, 54–74, and 81–101; these read MFYWILLALAIVAEITGTLSM, TGFILMLVMISLSYIFLSFAV, IALGVAYALWEGIGILLITLF, and EALSTMKIAGLATLVVGIVLI.

It belongs to the drug/metabolite transporter (DMT) superfamily. Small multidrug resistance (SMR) (TC 2.A.7.1) family. MdtJ subfamily. Forms a complex with MdtI.

The protein resides in the cell inner membrane. In terms of biological role, catalyzes the excretion of spermidine. The protein is Spermidine export protein MdtJ of Enterobacter sp. (strain 638).